A 354-amino-acid chain; its full sequence is Guanine nucleotide-binding protein alpha-12 subunit (354 aa).

The region spanning 31–354 (QPLKLLLLGS…SLLMNVAEIL (324 aa)) is the G-alpha domain. Residues 34 to 47 (KLLLLGSGECGKST) are G1 motif. Residues 39-46 (GSGECGKS), 178-184 (LRVRVKT), 203-207 (DVGGQ), 272-275 (NKID), and Ala329 each bind GTP. Mg(2+) contacts are provided by Ser46 and Thr184. The segment at 176–184 (DFLRVRVKT) is G2 motif. Residues 199 to 208 (FKLVDVGGQK) are G3 motif. Positions 268–275 (VLFFNKID) are G4 motif. The G5 motif stretch occupies residues 327–332 (TCALDS).

It belongs to the G-alpha family. G proteins are composed of 3 units; alpha, beta and gamma. The alpha chain contains the guanine nucleotide binding site.

Its function is as follows. Guanine nucleotide-binding proteins (G proteins) are involved as modulators or transducers in various transmembrane signaling systems. The polypeptide is Guanine nucleotide-binding protein alpha-12 subunit (gpaL) (Dictyostelium discoideum (Social amoeba)).